A 138-amino-acid chain; its full sequence is Basic phospholipase A2 Bs-N6 (138 aa).

Positions 1-16 (MRTLWIVAVLLVGVEG) are cleaved as a signal peptide. Intrachain disulfides connect cysteine 42–cysteine 131, cysteine 44–cysteine 60, cysteine 59–cysteine 111, cysteine 65–cysteine 138, cysteine 66–cysteine 104, cysteine 73–cysteine 97, and cysteine 91–cysteine 102. 3 residues coordinate Ca(2+): tyrosine 43, glycine 45, and glycine 47. Histidine 63 is an active-site residue. Aspartate 64 contributes to the Ca(2+) binding site. Aspartate 105 is an active-site residue.

As to quaternary structure, monomer. Ca(2+) serves as cofactor. Contains 7 disulfide bonds. Expressed by the venom gland.

Its subcellular location is the secreted. It carries out the reaction a 1,2-diacyl-sn-glycero-3-phosphocholine + H2O = a 1-acyl-sn-glycero-3-phosphocholine + a fatty acid + H(+). Functionally, snake venom phospholipase A2 (PLA2) that shows myotoxic activities. PLA2 catalyzes the calcium-dependent hydrolysis of the 2-acyl groups in 3-sn-phosphoglycerides. This Bothriechis schlegelii (Eyelash palm pitviper) protein is Basic phospholipase A2 Bs-N6.